The chain runs to 81 residues: Insulin (81 aa).

3 disulfide bridges follow: cysteine 7/cysteine 67, cysteine 19/cysteine 80, and cysteine 66/cysteine 71. Residues 33–58 (DVEQPLVNGPLHGEVGELPFQHEEYQ) constitute a propeptide, c peptide.

It belongs to the insulin family. Heterodimer of a B chain and an A chain linked by two disulfide bonds.

The protein resides in the secreted. Functionally, insulin decreases blood glucose concentration. It increases cell permeability to monosaccharides, amino acids and fatty acids. It accelerates glycolysis, the pentose phosphate cycle, and glycogen synthesis in liver. This Anas platyrhynchos (Mallard) protein is Insulin (INS).